Consider the following 398-residue polypeptide: MKKYNRIFTIVVDSLGIGETEDSKEYGDIGVDTLRHISESVESFNIPNLQKLGLANLHSINHVEPVEKPLAYFMKMKEASVGKDTMTGHWEMMGLKIEKPFQTFTDTGFPQELLDELSKRTGRSIVGNKSASGTEILDELGEHQIKTGDMIVYTSADSVLQICGHEENEIFGLDELYRCCEIARDLTLKDEWKVGRVIARPYVGMKKGEFKRTSNRHDYALKPYGTTVLNTLKDNGLDVISVGKIKDIFDGEGITESNASKSSVHGMEQTLEIMDKDFKGVCFVNLVDFDALWGHRRNPIGYAEELEKFDVNLEKLLNKLKEDDLLIITADHGNDPTYKGTDHTREYVPFLAYSPSMTGNGLMETSNSFATIGATIAENFEIDMPKNTIGQSVLEKLL.

The Mn(2+) site is built by Asp-13, Asp-290, His-295, Asp-331, His-332, and His-343.

Belongs to the phosphopentomutase family. Mn(2+) is required as a cofactor.

Its subcellular location is the cytoplasm. It catalyses the reaction 2-deoxy-alpha-D-ribose 1-phosphate = 2-deoxy-D-ribose 5-phosphate. The enzyme catalyses alpha-D-ribose 1-phosphate = D-ribose 5-phosphate. It participates in carbohydrate degradation; 2-deoxy-D-ribose 1-phosphate degradation; D-glyceraldehyde 3-phosphate and acetaldehyde from 2-deoxy-alpha-D-ribose 1-phosphate: step 1/2. Isomerase that catalyzes the conversion of deoxy-ribose 1-phosphate (dRib-1-P) and ribose 1-phosphate (Rib-1-P) to deoxy-ribose 5-phosphate (dRib-5-P) and ribose 5-phosphate (Rib-5-P), respectively. This Clostridium tetani (strain Massachusetts / E88) protein is Phosphopentomutase.